The following is a 331-amino-acid chain: Biotin synthase (331 aa).

One can recognise a Radical SAM core domain in the interval 39–264; it reads SELQTCYLIS…VFPRSMVRLA (226 aa). 3 residues coordinate [4Fe-4S] cluster: C54, C58, and C61. [2Fe-2S] cluster is bound by residues C98, C130, C190, and R262.

The protein belongs to the radical SAM superfamily. Biotin synthase family. In terms of assembly, homodimer. [4Fe-4S] cluster serves as cofactor. [2Fe-2S] cluster is required as a cofactor.

The catalysed reaction is (4R,5S)-dethiobiotin + (sulfur carrier)-SH + 2 reduced [2Fe-2S]-[ferredoxin] + 2 S-adenosyl-L-methionine = (sulfur carrier)-H + biotin + 2 5'-deoxyadenosine + 2 L-methionine + 2 oxidized [2Fe-2S]-[ferredoxin]. It functions in the pathway cofactor biosynthesis; biotin biosynthesis; biotin from 7,8-diaminononanoate: step 2/2. Functionally, catalyzes the conversion of dethiobiotin (DTB) to biotin by the insertion of a sulfur atom into dethiobiotin via a radical-based mechanism. In Chlamydia pneumoniae (Chlamydophila pneumoniae), this protein is Biotin synthase.